The following is a 181-amino-acid chain: Negative modulator of initiation of replication (181 aa).

Interaction with DNA regions lie at residues Ala87–Val88, Arg116–Tyr120, and Asn150–Lys156.

The protein belongs to the SeqA family. Homodimer. Polymerizes to form helical filaments.

It localises to the cytoplasm. Functionally, negative regulator of replication initiation, which contributes to regulation of DNA replication and ensures that replication initiation occurs exactly once per chromosome per cell cycle. Binds to pairs of hemimethylated GATC sequences in the oriC region, thus preventing assembly of replication proteins and re-initiation at newly replicated origins. Repression is relieved when the region becomes fully methylated. This Shigella flexneri protein is Negative modulator of initiation of replication.